The primary structure comprises 2537 residues: Histone-lysine N-methyltransferase SETD2 (2537 aa).

Positions 1 to 12 (MKPLPSQQPPPK) are enriched in pro residues. Disordered stretches follow at residues 1–31 (MKPL…ENEA), 91–142 (TALS…ELGR), 156–483 (PQLA…RDLR), 510–554 (YTSK…STSR), and 607–629 (SERE…TFKK). Over residues 18–31 (DPEHPTPEEEENEA) the composition is skewed to basic and acidic residues. Over residues 91–103 (TALSNEKQSDSPN) the composition is skewed to polar residues. S132 carries the post-translational modification Phosphoserine. Over residues 156-166 (PQLAASTTAAS) the composition is skewed to low complexity. The span at 187 to 205 (PSSPPPPPPPPQASSPSPP) shows a compositional bias: pro residues. S242 bears the Phosphoserine mark. Positions 264–291 (LEEHTVQTLKEQADHLLQKEDSHIGKEE) are enriched in basic and acidic residues. S322, S324, and S345 each carry phosphoserine. Composition is skewed to basic and acidic residues over residues 336 to 401 (RSHD…ERDR), 422 to 433 (RSERSHYYDSER), 440 to 468 (PYRE…EYKK), and 510 to 528 (YTSK…ETIK). Residue K360 forms a Glycyl lysine isopeptide (Lys-Gly) (interchain with G-Cter in SUMO2) linkage. Phosphoserine is present on S423. A phosphoserine mark is found at S532, S614, and S624. Residues 613-625 (GSPTPSNQLNDSP) are compositionally biased toward polar residues. T626 carries the phosphothreonine modification. S633 is subject to Phosphoserine. K637 participates in a covalent cross-link: Glycyl lysine isopeptide (Lys-Gly) (interchain with G-Cter in SUMO2). S697, S707, S743, and S753 each carry phosphoserine. The tract at residues 729 to 749 (RDSDDTCRQHNTSKSPFREME) is disordered. A Glycyl lysine isopeptide (Lys-Gly) (interchain with G-Cter in SUMO2) cross-link involves residue K775. Disordered stretches follow at residues 829–894 (CDNR…PTLD), 941–974 (QEAQ…HISD), 1015–1078 (EDYS…HYSD), and 1135–1185 (AHAQ…EDLP). Residues 830–847 (DNREPTDRHSENTCDEYK) are compositionally biased toward basic and acidic residues. A compositionally biased stretch (polar residues) spans 849–858 (SIGSTSSASH). The span at 867–883 (PIGSSGISSLQSPPSGI) shows a compositional bias: low complexity. The span at 951 to 974 (LHERRGRPEIPLDEEQRGHTHISD) shows a compositional bias: basic and acidic residues. The segment covering 1026-1037 (DESDSEDTESDD) has biased composition (acidic residues). A Phosphoserine modification is found at S1077. Residues 1150–1165 (SRSDHLGHLNPEDTLR) show a composition bias toward basic and acidic residues. S1201 carries the phosphoserine modification. Disordered stretches follow at residues 1232–1254 (GWDF…SYGT), 1280–1346 (WDPR…APEI), and 1366–1396 (NFEK…GELQ). Composition is skewed to polar residues over residues 1235–1254 (FSQQ…SYGT) and 1319–1329 (RSGSHFSSPSN). Basic and acidic residues predominate over residues 1366 to 1377 (NFEKNDIKERGP). 3 positions are modified to phosphoserine: S1387, S1389, and S1391. The segment at 1392 to 1688 (DGELQARKKV…KKERSRKKDS (297 aa)) is interaction with TUBA1A. The 55-residue stretch at 1468–1522 (IKRMQCECTPLSKDERAQGEVACGEDCLNRLLMIECSSRCPNGDYCSNRRFQRKQ) folds into the AWS domain. The Zn(2+) site is built by C1473, C1475, C1490, C1494, C1503, C1507, and C1513. Positions 1524 to 1641 (ADVEVILTEK…SGSELTFDYQ (118 aa)) constitute an SET domain. S-adenosyl-L-methionine is bound by residues 1534-1536 (KGW), 1577-1579 (HYY), and 1602-1603 (NH). C1605 contributes to the Zn(2+) binding site. Residues 1648 to 1664 (EAQKCFCGSANCRGYLG) enclose the Post-SET domain. S-adenosyl-L-methionine is bound at residue Q1650. C1652 is a binding site for Zn(2+). F1653 serves as a coordination point for S-adenosyl-L-methionine. Residues C1654 and C1659 each coordinate Zn(2+). Residues S1670, S1818, and S1819 each carry the phosphoserine modification. Residues 1806 to 1848 (TAVPQLSEGDGYSSENTSRAHTPLNTPDPSAKPSTEMDTDTPK) form a disordered region. Residues 1818–1833 (SSENTSRAHTPLNTPD) show a composition bias toward polar residues. Phosphothreonine is present on residues T1827 and T1846. A phosphoserine mark is found at S1862 and S1926. Disordered regions lie at residues 1914–1981 (SEAT…DISD) and 1993–2110 (LKEV…AQKQ). Residues 1934-1946 (TEPKDSNGTKLEE) show a composition bias toward basic and acidic residues. Over residues 1947–1964 (TIAEETPSQDEEEGVSDV) the composition is skewed to acidic residues. Phosphoserine occurs at positions 1954, 1962, and 1969. 3 stretches are compositionally biased toward basic and acidic residues: residues 1965 to 1978 (ESER…KTVD), 1993 to 2020 (LKEV…DAAA), and 2032 to 2045 (RSRE…SQNK). Residues S2053 and S2055 each carry the phosphoserine modification. Composition is skewed to basic and acidic residues over residues 2063–2073 (RGTKRPDDRYD) and 2084–2108 (KDRN…REAQ). A coiled-coil region spans residues 2090 to 2119 (STEERRKLFEQEVAQREAQKQQQQMQNLGM). The segment at 2110–2339 (QQQQMQNLGM…APGQPQSLQP (230 aa)) is low charge region. One can recognise a WW domain in the interval 2362 to 2395 (IVLPPNWKTARDPEGKIYYYHVITRQTQWDPPTW). Positions 2412–2438 (LGTPTYDENPMKTSKKPKTAEADTSSE) are disordered. An interaction with POLR2A region spans residues 2430–2537 (TAEADTSSEL…YKPKEDTELE (108 aa)).

This sequence belongs to the class V-like SAM-binding methyltransferase superfamily. Histone-lysine methyltransferase family. SET2 subfamily. Specifically interacts with hyperphosphorylated C-terminal domain (CTD) of RNA polymerase II large subunit (POLR2A): binds to CTD heptad repeats doubly phosphorylated on 'Ser-2' and 'Ser-5' of each heptad. Interacts with HTT. Interacts with IWS1. Interacts with p53/TP53; leading to regulate p53/TP53 target genes. Component of a complex with HNRNPL. Interacts with TUBA1A; the interaction is independent on alpha-tubulin acetylation on 'Lys-40'. Post-translationally, may be automethylated.

The protein resides in the nucleus. It localises to the chromosome. It carries out the reaction L-lysyl(36)-[histone H3] + 3 S-adenosyl-L-methionine = N(6),N(6),N(6)-trimethyl-L-lysyl(36)-[histone H3] + 3 S-adenosyl-L-homocysteine + 3 H(+). It catalyses the reaction L-lysyl-[protein] + S-adenosyl-L-methionine = N(6)-methyl-L-lysyl-[protein] + S-adenosyl-L-homocysteine + H(+). The enzyme catalyses L-lysyl-[protein] + 3 S-adenosyl-L-methionine = N(6),N(6),N(6)-trimethyl-L-lysyl-[protein] + 3 S-adenosyl-L-homocysteine + 3 H(+). With respect to regulation, specifically inhibited by sinefungin derivatives. In terms of biological role, histone methyltransferase that specifically trimethylates 'Lys-36' of histone H3 (H3K36me3) using dimethylated 'Lys-36' (H3K36me2) as substrate. It is capable of trimethylating unmethylated H3K36 (H3K36me0) in vitro. Represents the main enzyme generating H3K36me3, a specific tag for epigenetic transcriptional activation. Plays a role in chromatin structure modulation during elongation by coordinating recruitment of the FACT complex and by interacting with hyperphosphorylated POLR2A. Acts as a key regulator of DNA mismatch repair in G1 and early S phase by generating H3K36me3, a mark required to recruit MSH6 subunit of the MutS alpha complex: early recruitment of the MutS alpha complex to chromatin to be replicated allows a quick identification of mismatch DNA to initiate the mismatch repair reaction. Required for DNA double-strand break repair in response to DNA damage: acts by mediating formation of H3K36me3, promoting recruitment of RAD51 and DNA repair via homologous recombination (HR). Acts as a tumor suppressor. H3K36me3 also plays an essential role in the maintenance of a heterochromatic state, by recruiting DNA methyltransferase DNMT3A. H3K36me3 is also enhanced in intron-containing genes, suggesting that SETD2 recruitment is enhanced by splicing and that splicing is coupled to recruitment of elongating RNA polymerase. Required during angiogenesis. Required for endoderm development by promoting embryonic stem cell differentiation toward endoderm: acts by mediating formation of H3K36me3 in distal promoter regions of FGFR3, leading to regulate transcription initiation of FGFR3. In addition to histones, also mediates methylation of other proteins, such as tubulins and STAT1. Trimethylates 'Lys-40' of alpha-tubulins such as TUBA1B (alpha-TubK40me3); alpha-TubK40me3 is required for normal mitosis and cytokinesis and may be a specific tag in cytoskeletal remodeling. Involved in interferon-alpha-induced antiviral defense by mediating both monomethylation of STAT1 at 'Lys-525' and catalyzing H3K36me3 on promoters of some interferon-stimulated genes (ISGs) to activate gene transcription. This Mus musculus (Mouse) protein is Histone-lysine N-methyltransferase SETD2.